The chain runs to 302 residues: tRNA-cytidine(32) 2-sulfurtransferase (302 aa).

The PP-loop motif motif lies at 43–48; the sequence is SGGKDS. Residues Cys118, Cys121, and Cys209 each contribute to the [4Fe-4S] cluster site.

The protein belongs to the TtcA family. In terms of assembly, homodimer. Mg(2+) serves as cofactor. [4Fe-4S] cluster is required as a cofactor.

Its subcellular location is the cytoplasm. The catalysed reaction is cytidine(32) in tRNA + S-sulfanyl-L-cysteinyl-[cysteine desulfurase] + AH2 + ATP = 2-thiocytidine(32) in tRNA + L-cysteinyl-[cysteine desulfurase] + A + AMP + diphosphate + H(+). It participates in tRNA modification. Functionally, catalyzes the ATP-dependent 2-thiolation of cytidine in position 32 of tRNA, to form 2-thiocytidine (s(2)C32). The sulfur atoms are provided by the cysteine/cysteine desulfurase (IscS) system. The polypeptide is tRNA-cytidine(32) 2-sulfurtransferase (Polynucleobacter necessarius subsp. necessarius (strain STIR1)).